Consider the following 540-residue polypeptide: NADH-quinone oxidoreductase subunit N 1 (540 aa).

13 consecutive transmembrane segments (helical) span residues 11–31 (ILPELMLLLLGLLVLGSDVLT), 52–72 (AVGLGLVFIVGLVQSRFLFTV), 109–129 (FTMIARLTFIGAAFLTTLLAM), 142–162 (ALLIFSTLGMSIMAAATEFIL), 195–215 (FLFGSLSSAIFLYGISLTYGF), 250–270 (LILGMLFIIAGLGYKISVVPF), 284–306 (PVTAFLSTASKAAGFLLLYRLLT), 324–344 (WTSILAILALVTVIVGNLAAL), 352–372 (LLAYSSIGHAGFLLLAVLLWA), 386–406 (LIYYLIVYSLTNLGSFGVLAV), 431–451 (LMMTILILSLAGIPPLAGFWA), 464–486 (AVPLVTIAVIMTVVSLYYYLRFL), and 508–528 (AAIILSTVLVVLLGLLPNLIW).

It belongs to the complex I subunit 2 family. As to quaternary structure, NDH-1 is composed of 14 different subunits. Subunits NuoA, H, J, K, L, M, N constitute the membrane sector of the complex.

It is found in the cell membrane. It carries out the reaction a quinone + NADH + 5 H(+)(in) = a quinol + NAD(+) + 4 H(+)(out). Functionally, NDH-1 shuttles electrons from NADH, via FMN and iron-sulfur (Fe-S) centers, to quinones in the respiratory chain. The immediate electron acceptor for the enzyme in this species is believed to be ubiquinone. Couples the redox reaction to proton translocation (for every two electrons transferred, four hydrogen ions are translocated across the cytoplasmic membrane), and thus conserves the redox energy in a proton gradient. This is NADH-quinone oxidoreductase subunit N 1 from Roseiflexus castenholzii (strain DSM 13941 / HLO8).